We begin with the raw amino-acid sequence, 74 residues long: Large ribosomal subunit protein uL30 (74 aa).

Belongs to the universal ribosomal protein uL30 family. Part of the 50S ribosomal subunit.

In Micrococcus luteus (strain ATCC 4698 / DSM 20030 / JCM 1464 / CCM 169 / CCUG 5858 / IAM 1056 / NBRC 3333 / NCIMB 9278 / NCTC 2665 / VKM Ac-2230) (Micrococcus lysodeikticus), this protein is Large ribosomal subunit protein uL30.